The primary structure comprises 870 residues: Valine--tRNA ligase (870 aa).

Polar residues predominate over residues 1-13; that stretch reads MTSQTFTTSSATP. The disordered stretch occupies residues 1–21; the sequence is MTSQTFTTSSATPPTRGVVPD. The 'HIGH' region signature appears at 63-73; it reads PTVSGHLHPGH. Positions 479–505 are disordered; it reads YDHPLLPDESALPVDPASQPPSGYQES. Residues 595–599 carry the 'KMSKS' region motif; sequence KMSKS. ATP is bound at residue lysine 598.

This sequence belongs to the class-I aminoacyl-tRNA synthetase family. ValS type 2 subfamily. In terms of assembly, monomer.

Its subcellular location is the cytoplasm. The catalysed reaction is tRNA(Val) + L-valine + ATP = L-valyl-tRNA(Val) + AMP + diphosphate. Its function is as follows. Catalyzes the attachment of valine to tRNA(Val). As ValRS can inadvertently accommodate and process structurally similar amino acids such as threonine, to avoid such errors, it has a 'posttransfer' editing activity that hydrolyzes mischarged Thr-tRNA(Val) in a tRNA-dependent manner. This chain is Valine--tRNA ligase, found in Cutibacterium acnes (strain DSM 16379 / KPA171202) (Propionibacterium acnes).